The chain runs to 252 residues: 3-deoxy-manno-octulosonate cytidylyltransferase (252 aa).

It belongs to the KdsB family.

It localises to the cytoplasm. It catalyses the reaction 3-deoxy-alpha-D-manno-oct-2-ulosonate + CTP = CMP-3-deoxy-beta-D-manno-octulosonate + diphosphate. The protein operates within nucleotide-sugar biosynthesis; CMP-3-deoxy-D-manno-octulosonate biosynthesis; CMP-3-deoxy-D-manno-octulosonate from 3-deoxy-D-manno-octulosonate and CTP: step 1/1. Its pathway is bacterial outer membrane biogenesis; lipopolysaccharide biosynthesis. Activates KDO (a required 8-carbon sugar) for incorporation into bacterial lipopolysaccharide in Gram-negative bacteria. The protein is 3-deoxy-manno-octulosonate cytidylyltransferase of Vibrio cholerae serotype O1 (strain ATCC 39315 / El Tor Inaba N16961).